Reading from the N-terminus, the 396-residue chain is MDILIRPGDSLWYFSDLFKIPLQLLLDSNRNINPQLLQVGQRIQIPGYVTTSYTITQGDSLWQIAQNKNLPLNAILLVNPEIQPSRLHIGQTIQVPQRLTWRLVNGQQNYDYSMMMNDIKKLQTAYPFLQGTPIGNSVLAQPIPEILIGNGSKRIHYKASFHANEWITTPIIMTFLNDYLLALTNQTTIRGLSMGPLYNQTTLSLVPMVNPDGVNLVINGPPANEALKNKLIAWNHNSQNFSGWKANINGVDLNDQFPAKWELENARNPQTPGPRDYGGEAPLTQPEAIAMADLTRSRNFAWVLAFHTQGRVIYWGFENLEPPESQTMVEEFSRVSGYEPIQSANSYAGYKDWFIQDWRRPGFTVELGSGTNPLPISEFDTIYQEALGIFLAGLYL.

2 consecutive LysM domains span residues 1 to 45 (MDIL…RIQI) and 51 to 95 (TSYT…TIQV). A Peptidase M14 domain is found at 108 to 394 (QNYDYSMMMN…EALGIFLAGL (287 aa)). The Zn(2+) site is built by H162 and E165. D255 provides a ligand contact to substrate. A Zn(2+)-binding site is contributed by H307. Y347 acts as the Proton donor in catalysis. E366 functions as the Proton donor/acceptor in the catalytic mechanism.

The protein belongs to the peptidase M14 family. The cofactor is Zn(2+).

It catalyses the reaction Hydrolysis of gamma-D-glutamyl bonds to the L-terminus (position 7) of meso-diaminopimelic acid (meso-A2pm) in 7-(L-Ala-gamma-D-Glu)-meso-A2pm and 7-(L-Ala-gamma-D-Glu)-7-(D-Ala)-meso-A2pm. It is required that the D-terminal amino and carboxy groups of meso-A2pm are unsubstituted.. An endopeptidase which hydrolyzes the gamma-D-Glu-(L)meso-diaminopimelic acid bond of L-Ala-gamma-D-Glu-(L)meso-diaminopimelic acid and L-Ala-gamma-D-Glu-(L)meso-diaminopimelic acid(L)-D-Ala peptides. It is active on spore cortex peptidoglycan. This is Gamma-D-glutamyl-L-diamino acid endopeptidase 1 from Lysinibacillus sphaericus (Bacillus sphaericus).